The primary structure comprises 221 residues: Pectate lyase C (221 aa).

The signal sequence occupies residues 1–28 (MKRLAGTVILSGLLVCGFGQALPEKALA).

The protein belongs to the polysaccharide lyase 3 family. Requires Ca(2+) as cofactor.

The protein resides in the secreted. It catalyses the reaction Eliminative cleavage of (1-&gt;4)-alpha-D-galacturonan to give oligosaccharides with 4-deoxy-alpha-D-galact-4-enuronosyl groups at their non-reducing ends.. The enzyme catalyses Eliminative cleavage of (1-&gt;4)-alpha-D-galacturonan methyl ester to give oligosaccharides with 4-deoxy-6-O-methyl-alpha-D-galact-4-enuronosyl groups at their non-reducing ends.. The protein operates within glycan metabolism; pectin degradation; 2-dehydro-3-deoxy-D-gluconate from pectin: step 2/5. In terms of biological role, catalyzes the depolymerization of both polygalacturonate and pectins of methyl esterification degree from 22 to 89%, with an endo mode of action. In contrast to the majority of pectate lyases, displays high activity on highly methylated pectins. The sequence is that of Pectate lyase C (pelC) from Bacillus licheniformis (strain ATCC 14580 / DSM 13 / JCM 2505 / CCUG 7422 / NBRC 12200 / NCIMB 9375 / NCTC 10341 / NRRL NRS-1264 / Gibson 46).